The sequence spans 393 residues: tRNA (guanine-N(7)-)-methyltransferase (393 aa).

Glu124, Glu149, and Asp176 together coordinate S-adenosyl-L-methionine. Asp232 lines the substrate pocket.

This sequence belongs to the class I-like SAM-binding methyltransferase superfamily. TrmB family.

It catalyses the reaction guanosine(46) in tRNA + S-adenosyl-L-methionine = N(7)-methylguanosine(46) in tRNA + S-adenosyl-L-homocysteine. The protein operates within tRNA modification; N(7)-methylguanine-tRNA biosynthesis. Its function is as follows. Catalyzes the formation of N(7)-methylguanine at position 46 (m7G46) in tRNA. The chain is tRNA (guanine-N(7)-)-methyltransferase from Helicobacter pylori (strain HPAG1).